The chain runs to 786 residues: Endonuclease MutS2 (786 aa).

335–342 contacts ATP; the sequence is GPNTGGKT. Residues 529-549 are disordered; sequence SQKNAERERKEAEEHRKQSEK. The region spanning 711 to 786 is the Smr domain; sequence LDLRGERYED…GLGVTVVELK (76 aa).

It belongs to the DNA mismatch repair MutS family. MutS2 subfamily. As to quaternary structure, homodimer. Binds to stalled ribosomes, contacting rRNA.

Its function is as follows. Endonuclease that is involved in the suppression of homologous recombination and thus may have a key role in the control of bacterial genetic diversity. In terms of biological role, acts as a ribosome collision sensor, splitting the ribosome into its 2 subunits. Detects stalled/collided 70S ribosomes which it binds and splits by an ATP-hydrolysis driven conformational change. Acts upstream of the ribosome quality control system (RQC), a ribosome-associated complex that mediates the extraction of incompletely synthesized nascent chains from stalled ribosomes and their subsequent degradation. Probably generates substrates for RQC. The chain is Endonuclease MutS2 from Bacillus mycoides (strain KBAB4) (Bacillus weihenstephanensis).